The primary structure comprises 198 residues: Recombination protein RecR (198 aa).

The C4-type zinc finger occupies 59-74; it reads CSLCCNYTDHDPCPIC. A Toprim domain is found at 82–175; it reads TLLCIVEQPR…KVTRIAHGLP (94 aa).

This sequence belongs to the RecR family.

Its function is as follows. May play a role in DNA repair. It seems to be involved in an RecBC-independent recombinational process of DNA repair. It may act with RecF and RecO. The sequence is that of Recombination protein RecR from Desulfitobacterium hafniense (strain Y51).